Reading from the N-terminus, the 70-residue chain is Brevinin-1PLc (70 aa).

The N-terminal stretch at 1–22 (MFTLKKSMLLLFFLGTINLSLC) is a signal peptide. Residues 23 to 44 (EEERNAEEERRDEPDEMDVEVE) constitute a propeptide that is removed on maturation. Cysteine 64 and cysteine 70 form a disulfide bridge.

As to expression, expressed by the skin glands.

The protein resides in the secreted. Antimicrobial activity against the Gram-negative bacterium E.coli, the Gram-positive bacterium S.aureus and the yeast C.albicans. This chain is Brevinin-1PLc, found in Lithobates palustris (Pickerel frog).